We begin with the raw amino-acid sequence, 4076 residues long: E3 ubiquitin-protein ligase TOM1-like (4076 aa).

The span at Ser-225–Ala-237 shows a compositional bias: low complexity. Disordered regions lie at residues Ser-225–Ala-256, Tyr-288–Pro-360, Ile-748–Ser-819, Leu-921–Ala-970, Ser-1083–Thr-1103, Met-1571–Glu-1646, Pro-1988–Ile-2041, Asn-2067–Lys-2110, Glu-2275–Ser-2295, Ser-2356–Tyr-2551, Gly-2581–Pro-2634, Ile-2782–His-2817, Glu-2858–Asp-2955, Glu-3037–Leu-3066, Arg-3105–Thr-3132, Lys-3216–Gly-3241, and Glu-3353–Pro-3444. Positions Lys-238–Thr-250 are enriched in basic and acidic residues. Residues Thr-311–Pro-320 show a composition bias toward low complexity. Positions Arg-322–Glu-343 are enriched in polar residues. The span at Glu-767 to Asp-778 shows a compositional bias: acidic residues. Over residues Val-940–Asp-950 the composition is skewed to basic and acidic residues. Polar residues predominate over residues Ala-959–Pro-969. Residues Pro-1606–Ala-1620 are compositionally biased toward polar residues. Positions Pro-1621–Pro-1632 are enriched in low complexity. Residues Ala-1633–Arg-1642 show a composition bias toward polar residues. Positions Val-2021 to Ile-2041 are enriched in basic and acidic residues. The span at Asn-2086–Glu-2096 shows a compositional bias: polar residues. Residues Ser-2099–Lys-2110 are compositionally biased toward basic and acidic residues. Acidic residues-rich tracts occupy residues Asp-2378–Pro-2387 and Glu-2405–Glu-2450. The segment covering Gln-2460–Gly-2469 has biased composition (low complexity). Composition is skewed to acidic residues over residues Glu-2470–Asp-2516 and Glu-2523–Tyr-2551. The segment covering Glu-2587–Ile-2597 has biased composition (basic and acidic residues). Acidic residues predominate over residues Asp-2598–Phe-2622. 2 stretches are compositionally biased toward basic and acidic residues: residues His-2788 to Gln-2803 and Glu-2858 to Glu-2912. The stretch at Ala-2851–Ala-2929 forms a coiled coil. Residues Ala-2913–Ala-2927 show a composition bias toward low complexity. A compositionally biased stretch (basic and acidic residues) spans Glu-3037–Gln-3047. Positions His-3108 to Ser-3117 are enriched in polar residues. Positions Pro-3341–Ala-3375 form a coiled coil. The span at Glu-3353–Ala-3372 shows a compositional bias: basic and acidic residues. Positions Ala-3373–Asp-3414 are enriched in low complexity. The span at Gln-3415 to Ile-3439 shows a compositional bias: basic and acidic residues. One can recognise an HECT domain in the interval Lys-3740–Ala-4076. Cys-4043 (glycyl thioester intermediate) is an active-site residue.

The protein belongs to the UPL family. TOM1/PTR1 subfamily.

Its subcellular location is the nucleus. It carries out the reaction S-ubiquitinyl-[E2 ubiquitin-conjugating enzyme]-L-cysteine + [acceptor protein]-L-lysine = [E2 ubiquitin-conjugating enzyme]-L-cysteine + N(6)-ubiquitinyl-[acceptor protein]-L-lysine.. It functions in the pathway protein modification; protein ubiquitination. Functionally, probable ubiquitin ligase protein, which may be involved in mRNA export. E3 ubiquitin ligase proteins mediate ubiquitination and subsequent proteasomal degradation of target proteins. Participates in mRNA export from the nucleus by regulating the transport of hnRNP proteins. The sequence is that of E3 ubiquitin-protein ligase TOM1-like from Neurospora crassa (strain ATCC 24698 / 74-OR23-1A / CBS 708.71 / DSM 1257 / FGSC 987).